The sequence spans 901 residues: Protein translocase subunit SecA (901 aa).

Residues Gln-85, Gly-103 to Thr-107, and Asp-510 contribute to the ATP site. Positions Arg-848 to Gln-901 are disordered. A compositionally biased stretch (polar residues) spans Ile-849 to Ser-866. Zn(2+) contacts are provided by Cys-882, Cys-884, Cys-893, and His-894. The segment covering Lys-888–Gln-901 has biased composition (basic residues).

Belongs to the SecA family. As to quaternary structure, monomer and homodimer. Part of the essential Sec protein translocation apparatus which comprises SecA, SecYEG and auxiliary proteins SecDF-YajC and YidC. Forms a complex with SecB. The cofactor is Zn(2+).

It is found in the cell inner membrane. It localises to the cytoplasm. The catalysed reaction is ATP + H2O + cellular proteinSide 1 = ADP + phosphate + cellular proteinSide 2.. In terms of biological role, part of the Sec protein translocase complex. Interacts with the SecYEG preprotein conducting channel. Has a central role in coupling the hydrolysis of ATP to the transfer of proteins into and across the cell membrane, serving both as a receptor for the preprotein-SecB complex and as an ATP-driven molecular motor driving the stepwise translocation of polypeptide chains across the membrane. This is Protein translocase subunit SecA from Haemophilus influenzae (strain ATCC 51907 / DSM 11121 / KW20 / Rd).